The sequence spans 379 residues: Cytochrome b (379 aa).

Transmembrane regions (helical) follow at residues 33 to 53 (FGSL…FLAM), 77 to 98 (WLIR…FIHV), 113 to 133 (WNIG…GYVL), and 178 to 198 (FFAF…VHLL). Residues H83 and H97 each coordinate heme b. Residues H182 and H196 each contribute to the heme b site. A ubiquinone is bound at residue H201. 4 helical membrane-spanning segments follow: residues 226–246 (TKDL…ALFF), 288–308 (LGGV…PLLN), 320–340 (ITQV…WIGG), and 347–367 (FTMI…ILIP).

It belongs to the cytochrome b family. The cytochrome bc1 complex contains 11 subunits: 3 respiratory subunits (MT-CYB, CYC1 and UQCRFS1), 2 core proteins (UQCRC1 and UQCRC2) and 6 low-molecular weight proteins (UQCRH/QCR6, UQCRB/QCR7, UQCRQ/QCR8, UQCR10/QCR9, UQCR11/QCR10 and a cleavage product of UQCRFS1). This cytochrome bc1 complex then forms a dimer. Heme b is required as a cofactor.

It localises to the mitochondrion inner membrane. In terms of biological role, component of the ubiquinol-cytochrome c reductase complex (complex III or cytochrome b-c1 complex) that is part of the mitochondrial respiratory chain. The b-c1 complex mediates electron transfer from ubiquinol to cytochrome c. Contributes to the generation of a proton gradient across the mitochondrial membrane that is then used for ATP synthesis. This Akodon spegazzinii (Spegazzini's grass mouse) protein is Cytochrome b (MT-CYB).